Consider the following 600-residue polypeptide: Brain-enriched guanylate kinase-associated protein (600 aa).

Residue Met1 is modified to N-acetylmethionine. Tyr137 carries the phosphotyrosine modification. Residues 192-222 (PGSLSSRMSDASARDLGYRDGVEKSGPRPPY) are disordered. Ser200 carries the post-translational modification Phosphoserine. Basic and acidic residues predominate over residues 203–217 (SARDLGYRDGVEKSG). A phosphoserine mark is found at Ser229 and Ser246. Phosphothreonine is present on Thr249. Phosphoserine is present on Ser265. The disordered stretch occupies residues 298–317 (SSYSSFSATSEEKEHAQAGT). Ser372 bears the Phosphoserine mark. The residue at position 380 (Arg380) is an Asymmetric dimethylarginine. Residues Ser463, Ser473, Ser483, Ser485, Ser508, Ser510, and Ser514 each carry the phosphoserine modification. The tract at residues 537–590 (GAGSSPEPEHGSRESLEPSSMEASPEMHPPTRLSPQQAFPRTGGSGLSRKDSLT) is disordered. A compositionally biased stretch (basic and acidic residues) spans 543 to 552 (EPEHGSRESL). Phosphoserine is present on residues Ser560 and Ser570.

In terms of assembly, interacts with DLG4 and DLGAP1 and forms a ternary complex.

The protein resides in the cytoplasm. Its subcellular location is the membrane. Functionally, may sustain the structure of the postsynaptic density (PSD). This chain is Brain-enriched guanylate kinase-associated protein (Begain), found in Mus musculus (Mouse).